An 842-amino-acid chain; its full sequence is Glucans biosynthesis glucosyltransferase H (842 aa).

Transmembrane regions (helical) follow at residues 141-161 (LLLL…TILP), 194-214 (ILLL…TALM), 513-533 (VFLT…FLAL), 570-590 (LFAS…ILIW), 615-635 (VLLA…AFLG), and 680-700 (FLFW…VSVI).

This sequence belongs to the glycosyltransferase 2 family. OpgH subfamily.

Its subcellular location is the cell inner membrane. The protein operates within glycan metabolism; osmoregulated periplasmic glucan (OPG) biosynthesis. Its function is as follows. Involved in the biosynthesis of osmoregulated periplasmic glucans (OPGs). This Enterobacter sp. (strain 638) protein is Glucans biosynthesis glucosyltransferase H.